The chain runs to 362 residues: tRNA-specific 2-thiouridylase MnmA (362 aa).

ATP contacts are provided by residues 6 to 13 (AMSGGVDS) and Leu32. The active-site Nucleophile is the Cys101. A disulfide bridge connects residues Cys101 and Cys197. Gly125 is an ATP binding site. Residues 147-149 (KDQ) are interaction with tRNA. Cys197 functions as the Cysteine persulfide intermediate in the catalytic mechanism.

Belongs to the MnmA/TRMU family.

It is found in the cytoplasm. It catalyses the reaction S-sulfanyl-L-cysteinyl-[protein] + uridine(34) in tRNA + AH2 + ATP = 2-thiouridine(34) in tRNA + L-cysteinyl-[protein] + A + AMP + diphosphate + H(+). Catalyzes the 2-thiolation of uridine at the wobble position (U34) of tRNA, leading to the formation of s(2)U34. The sequence is that of tRNA-specific 2-thiouridylase MnmA from Acidothermus cellulolyticus (strain ATCC 43068 / DSM 8971 / 11B).